A 1345-amino-acid polypeptide reads, in one-letter code: CRISPR-associated endonuclease Cas9 (1345 aa).

The active-site For RuvC-like nuclease domain is D10. Mg(2+) is bound by residues D10, E762, and E766. The HNH Cas9-type domain maps to 770-921 (TNQGRRNSQQ…DKAGFIKRQL (152 aa)). The Proton acceptor for HNH nuclease domain role is filled by H840. H983 contributes to the Mg(2+) binding site.

This sequence belongs to the CRISPR-associated protein Cas9 family. Subtype II-A subfamily. Monomer. Binds crRNA and tracrRNA. Mg(2+) serves as cofactor.

CRISPR (clustered regularly interspaced short palindromic repeat) is an adaptive immune system that provides protection against mobile genetic elements (viruses, transposable elements and conjugative plasmids). CRISPR clusters contain spacers, sequences complementary to antecedent mobile elements, and target invading nucleic acids. CRISPR clusters are transcribed and processed into CRISPR RNA (crRNA). In type II CRISPR systems correct processing of pre-crRNA requires a trans-encoded small RNA (tracrRNA), endogenous ribonuclease 3 (rnc) and this protein. The tracrRNA serves as a guide for ribonuclease 3-aided processing of pre-crRNA. Subsequently Cas9/crRNA/tracrRNA endonucleolytically cleaves linear or circular dsDNA target complementary to the spacer; Cas9 is inactive in the absence of the 2 guide RNAs (gRNA). Cas9 recognizes the protospacer adjacent motif (PAM) in the CRISPR repeat sequences to help distinguish self versus nonself, as targets within the bacterial CRISPR locus do not have PAMs. PAM recognition is also required for catalytic activity. Complements the gRNA coprocessing defect in a cas9 deletion in S.pyogenes strain 370 and cuts target plasmid in Cas9:gRNAs mixing experiments with S.thermophilus CRISPR3 from strain LMD-9. The protein is CRISPR-associated endonuclease Cas9 of Streptococcus mutans serotype c (strain ATCC 700610 / UA159).